The sequence spans 147 residues: Small ribosomal subunit protein uS12 (147 aa).

The protein belongs to the universal ribosomal protein uS12 family. Part of the 30S ribosomal subunit.

Functionally, with S4 and S5 plays an important role in translational accuracy. Located at the interface of the 30S and 50S subunits. The protein is Small ribosomal subunit protein uS12 of Methanococcus vannielii (strain ATCC 35089 / DSM 1224 / JCM 13029 / OCM 148 / SB).